The sequence spans 775 residues: E3 ubiquitin-protein ligase UHRF1 (775 aa).

Positions 1 to 77 constitute a Ubiquitin-like domain; the sequence is MWIQVRTMDG…IVQLLVRQIP (77 aa). The segment at 81 to 128 is disordered; sequence PTKDKECGISDADSGCGSGQGESDKNSSCGEGATDVDGQPAGINSENV. 2 tudor-like regions span residues 131–207 and 214–283; these read SLYK…LRAR and DLKV…IEEP. Residues 293 to 301 form a linker region; the sequence is PQKRQNGPE. The segment at 299–366 adopts a PHD-type zinc-finger fold; it reads GPECKHCKDN…DWYCPDCRND (68 aa). Histone H3R2me0 binding stretches follow at residues 333–337 and 353–355; these read CDECD and PQD. Residues 419-582 enclose the YDG domain; it reads GPIPGVPVGT…FLVWRYLLRR (164 aa). The interval 445-446 is required to promote base flipping; sequence HV. Residues 463-464 and D469 contribute to the DNA site; that span reads AG. 2 required for formation of a 5-methylcytosine-binding pocket regions span residues 466–469 and 478–481; these read YEDD and YTGS. A compositionally biased stretch (basic and acidic residues) spans 616 to 628; it reads ASKEREKENKTED. The interval 616-655 is disordered; that stretch reads ASKEREKENKTEDELSESPSKGKRKRNSAGSGLSDAKSTP. The RING-type zinc finger occupies 706–745; that stretch reads CICCQEVVYEPITTECHHNICKGCLDRSFKALVHNCPACR.

The protein localises to the nucleus. The enzyme catalyses S-ubiquitinyl-[E2 ubiquitin-conjugating enzyme]-L-cysteine + [acceptor protein]-L-lysine = [E2 ubiquitin-conjugating enzyme]-L-cysteine + N(6)-ubiquitinyl-[acceptor protein]-L-lysine.. It participates in protein modification; protein ubiquitination. Functionally, multidomain protein that acts as a key epigenetic regulator by bridging DNA methylation and chromatin modification. Specifically recognizes and binds hemimethylated DNA at replication forks via its YDG domain and recruits dnmt1 methyltransferase to ensure faithful propagation of the DNA methylation patterns through DNA replication. In addition to its role in maintenance of DNA methylation, also plays a key role in chromatin modification: through its tudor-like regions and PHD-type zinc fingers, specifically recognizes and binds histone H3 trimethylated at 'Lys-9' (H3K9me3) and unmethylated at 'Arg-2' (H3R2me0), respectively, and recruits chromatin proteins. Enriched in pericentric heterochromatin where it recruits different chromatin modifiers required for this chromatin replication. Also localizes to euchromatic regions where it negatively regulates transcription possibly by impacting DNA methylation and histone modifications. Has E3 ubiquitin-protein ligase activity by mediating the ubiquitination of target proteins. However, it is still unclear how E3 ubiquitin-protein ligase activity is related to its role in chromatin in vivo. In Xenopus tropicalis (Western clawed frog), this protein is E3 ubiquitin-protein ligase UHRF1 (uhrf1).